Consider the following 401-residue polypeptide: Alternative oxidase, mitochondrial (401 aa).

The tract at residues 53-81 (KRASLSLQPSVREAEKSQGPVVGSEGRGV) is disordered. The chain crosses the membrane as a helical span at residues 184 to 204 (LFRIILLESIAGVPGMVGGTL). Positions 191, 230, and 233 each coordinate Fe cation. Residues 249 to 269 (ALVLAAQGVFYNAFFLTYLIS) form a helical membrane-spanning segment. The Fe cation site is built by Glu-281, Glu-282, Glu-335, and His-338.

The protein belongs to the alternative oxidase family. Requires Fe cation as cofactor.

The protein localises to the mitochondrion inner membrane. Catalyzes cyanide-resistant oxygen consumption. May increase respiration when the cytochrome respiratory pathway is restricted, or in response to low temperatures. This is Alternative oxidase, mitochondrial (AOX1) from Cryptococcus neoformans var. grubii serotype A (strain H99 / ATCC 208821 / CBS 10515 / FGSC 9487) (Filobasidiella neoformans var. grubii).